The chain runs to 170 residues: Small ribosomal subunit protein mS25 (170 aa).

It belongs to the mitochondrion-specific ribosomal protein mS25 family. As to quaternary structure, component of the mitochondrial ribosome small subunit (28S) which comprises a 12S rRNA and about 30 distinct proteins.

It localises to the mitochondrion. The protein is Small ribosomal subunit protein mS25 (mrps-25) of Caenorhabditis elegans.